The primary structure comprises 253 residues: 1-(5-phosphoribosyl)-5-[(5-phosphoribosylamino)methylideneamino] imidazole-4-carboxamide isomerase (253 aa).

The active-site Proton acceptor is Asp8. The active-site Proton donor is Asp131.

Belongs to the HisA/HisF family.

Its subcellular location is the cytoplasm. It catalyses the reaction 1-(5-phospho-beta-D-ribosyl)-5-[(5-phospho-beta-D-ribosylamino)methylideneamino]imidazole-4-carboxamide = 5-[(5-phospho-1-deoxy-D-ribulos-1-ylimino)methylamino]-1-(5-phospho-beta-D-ribosyl)imidazole-4-carboxamide. Its pathway is amino-acid biosynthesis; L-histidine biosynthesis; L-histidine from 5-phospho-alpha-D-ribose 1-diphosphate: step 4/9. In Polynucleobacter necessarius subsp. necessarius (strain STIR1), this protein is 1-(5-phosphoribosyl)-5-[(5-phosphoribosylamino)methylideneamino] imidazole-4-carboxamide isomerase.